We begin with the raw amino-acid sequence, 329 residues long: Holliday junction branch migration complex subunit RuvB (329 aa).

The interval 1 to 180 (MKNILQSTEC…FGIPIHLEFY (180 aa)) is large ATPase domain (RuvB-L). ATP is bound by residues arginine 20, glycine 61, lysine 64, threonine 65, threonine 66, 127-129 (EDF), arginine 170, tyrosine 180, and arginine 217. Threonine 65 is a Mg(2+) binding site. A small ATPAse domain (RuvB-S) region spans residues 181 to 252 (STEELTKVIQ…FADKALLRLG (72 aa)). A head domain (RuvB-H) region spans residues 255–329 (KLGLDRQDIQ…ISHLREQEYI (75 aa)). DNA is bound by residues arginine 308 and arginine 313.

This sequence belongs to the RuvB family. Homohexamer. Forms an RuvA(8)-RuvB(12)-Holliday junction (HJ) complex. HJ DNA is sandwiched between 2 RuvA tetramers; dsDNA enters through RuvA and exits via RuvB. An RuvB hexamer assembles on each DNA strand where it exits the tetramer. Each RuvB hexamer is contacted by two RuvA subunits (via domain III) on 2 adjacent RuvB subunits; this complex drives branch migration. In the full resolvosome a probable DNA-RuvA(4)-RuvB(12)-RuvC(2) complex forms which resolves the HJ.

The protein resides in the cytoplasm. The catalysed reaction is ATP + H2O = ADP + phosphate + H(+). The RuvA-RuvB-RuvC complex processes Holliday junction (HJ) DNA during genetic recombination and DNA repair, while the RuvA-RuvB complex plays an important role in the rescue of blocked DNA replication forks via replication fork reversal (RFR). RuvA specifically binds to HJ cruciform DNA, conferring on it an open structure. The RuvB hexamer acts as an ATP-dependent pump, pulling dsDNA into and through the RuvAB complex. RuvB forms 2 homohexamers on either side of HJ DNA bound by 1 or 2 RuvA tetramers; 4 subunits per hexamer contact DNA at a time. Coordinated motions by a converter formed by DNA-disengaged RuvB subunits stimulates ATP hydrolysis and nucleotide exchange. Immobilization of the converter enables RuvB to convert the ATP-contained energy into a lever motion, pulling 2 nucleotides of DNA out of the RuvA tetramer per ATP hydrolyzed, thus driving DNA branch migration. The RuvB motors rotate together with the DNA substrate, which together with the progressing nucleotide cycle form the mechanistic basis for DNA recombination by continuous HJ branch migration. Branch migration allows RuvC to scan DNA until it finds its consensus sequence, where it cleaves and resolves cruciform DNA. In Ehrlichia chaffeensis (strain ATCC CRL-10679 / Arkansas), this protein is Holliday junction branch migration complex subunit RuvB.